Here is a 459-residue protein sequence, read N- to C-terminus: Cysteine--tRNA ligase (459 aa).

C28 serves as a coordination point for Zn(2+). A 'HIGH' region motif is present at residues 30–40; sequence VTIYDLCHIGH. The Zn(2+) site is built by C209, H234, and E238. Residues 266 to 270 carry the 'KMSKS' region motif; the sequence is KMSKS. K269 contacts ATP.

The protein belongs to the class-I aminoacyl-tRNA synthetase family. Monomer. Requires Zn(2+) as cofactor.

It is found in the cytoplasm. The catalysed reaction is tRNA(Cys) + L-cysteine + ATP = L-cysteinyl-tRNA(Cys) + AMP + diphosphate. The sequence is that of Cysteine--tRNA ligase from Shewanella baltica (strain OS155 / ATCC BAA-1091).